A 2057-amino-acid chain; its full sequence is Protein TIC 214 (2057 aa).

Transmembrane regions (helical) follow at residues 13–33 (KIINSVLAAGLYYGFLSAFSI), 62–82 (LIMGQILLFISIYYKPFHIAL), 158–178 (LFVTSSFFAWFIGQILVCEFF), and 206–226 (SDYFHFFFVILFFMMSLHSFG). Positions 248-340 (LILKGTDEEE…RVIQEKERKS (93 aa)) form a coiled coil. The segment covering 288–302 (NHLKKKKDRQKKQGT) has biased composition (basic residues). 5 disordered regions span residues 288-316 (NHLKKKKDRQKKQGTRGHSDKEFHSNSNT), 614-807 (ETHT…EEKG), 890-910 (DEQTKREEKPKRESKKKNDRV), 1597-1634 (EEEEINPEEEINPEEEINPEEEINPSSNQKTPIGTNND), and 1724-1817 (KKKN…KSLS). 2 stretches are compositionally biased toward basic and acidic residues: residues 621-657 (ATDKETKPNASKETDTVNKETKPNASKETDTIDKETK) and 665-702 (NTVDKETKTNASKETDTVDKETKPNASKETDTIDKETK). The span at 704–713 (NASKETNTVN) shows a compositional bias: polar residues. Basic and acidic residues-rich tracts occupy residues 714–807 (KETK…EEKG) and 891–900 (EQTKREEKPK). Over residues 1597 to 1619 (EEEEINPEEEINPEEEINPEEEI) the composition is skewed to acidic residues. The span at 1622–1634 (SSNQKTPIGTNND) shows a compositional bias: polar residues. A compositionally biased stretch (basic and acidic residues) spans 1753-1817 (TNSEKKSKTN…ETDSEKKSLS (65 aa)).

Belongs to the TIC214 family. Part of the Tic complex.

Its subcellular location is the plastid. It is found in the chloroplast inner membrane. Its function is as follows. Involved in protein precursor import into chloroplasts. May be part of an intermediate translocation complex acting as a protein-conducting channel at the inner envelope. The sequence is that of Protein TIC 214 from Ipomoea purpurea (Common morning glory).